The following is a 215-amino-acid chain: Deoxyribose-phosphate aldolase (215 aa).

The active-site Proton donor/acceptor is Asp-89. The active-site Schiff-base intermediate with acetaldehyde is Lys-153. Lys-182 functions as the Proton donor/acceptor in the catalytic mechanism.

Belongs to the DeoC/FbaB aldolase family. DeoC type 1 subfamily.

It is found in the cytoplasm. The catalysed reaction is 2-deoxy-D-ribose 5-phosphate = D-glyceraldehyde 3-phosphate + acetaldehyde. It functions in the pathway carbohydrate degradation; 2-deoxy-D-ribose 1-phosphate degradation; D-glyceraldehyde 3-phosphate and acetaldehyde from 2-deoxy-alpha-D-ribose 1-phosphate: step 2/2. Its function is as follows. Catalyzes a reversible aldol reaction between acetaldehyde and D-glyceraldehyde 3-phosphate to generate 2-deoxy-D-ribose 5-phosphate. This Lactiplantibacillus plantarum (strain ATCC BAA-793 / NCIMB 8826 / WCFS1) (Lactobacillus plantarum) protein is Deoxyribose-phosphate aldolase.